The primary structure comprises 92 residues: Small ribosomal subunit protein uS19 (92 aa).

This sequence belongs to the universal ribosomal protein uS19 family.

Its function is as follows. Protein S19 forms a complex with S13 that binds strongly to the 16S ribosomal RNA. The protein is Small ribosomal subunit protein uS19 of Orientia tsutsugamushi (strain Boryong) (Rickettsia tsutsugamushi).